The following is a 340-amino-acid chain: Probable rRNA-processing protein EBP2 homolog (340 aa).

Positions 1–10 (MVRKMNKLAK) are enriched in basic residues. Disordered stretches follow at residues 1–59 (MVRK…DDDE) and 245–340 (HGLD…RGRR). Composition is skewed to acidic residues over residues 23–37 (PESDSDGSEFDFDNA) and 46–59 (MDIEEVESDGDDDE). A coiled-coil region spans residues 206–245 (QKEVLAAKNTEKKNLAEAVKKHKKGMKQQLEDMLNNVKRH). Gly residues-rich tracts occupy residues 264 to 277 (GRGGAGRGGAGRGG) and 318 to 333 (PRGGFGGRGRGGGRGG).

The protein belongs to the EBP2 family.

The protein localises to the nucleus. Its subcellular location is the nucleolus. Required for the processing of the 27S pre-rRNA. The polypeptide is Probable rRNA-processing protein EBP2 homolog (Caenorhabditis elegans).